Reading from the N-terminus, the 275-residue chain is Trypsin-4 (275 aa).

Residues 1 to 18 (MSNKITILLAVLLAVVAC) form the signal peptide. A propeptide spans 19 to 48 (AQAHASHQRRVPYPLPRFLPRPHHTVSNHR) (activation peptide). The Peptidase S1 domain maps to 49–274 (IVGGFEIDVA…VRDWIRETCG (226 aa)). Cysteine 74 and cysteine 90 are disulfide-bonded. Active-site charge relay system residues include histidine 89 and aspartate 134. Cystine bridges form between cysteine 199/cysteine 215 and cysteine 226/cysteine 250. Residue serine 230 is the Charge relay system of the active site.

This sequence belongs to the peptidase S1 family. In terms of tissue distribution, expressed in the midgut. Expression levels drop a few hours after blood feeding and pick up again 28 hours later.

The protein resides in the secreted. The enzyme catalyses Preferential cleavage: Arg-|-Xaa, Lys-|-Xaa.. Its function is as follows. Constitutive trypsin that is expressed 2 days after emergence, coinciding with host seeking behavior of the female. This Anopheles gambiae (African malaria mosquito) protein is Trypsin-4 (TRYP4).